The primary structure comprises 356 residues: GTPase Obg (356 aa).

The 159-residue stretch at 1-159 folds into the Obg domain; that stretch reads MKFLDEAKVY…RWIWLRMKLI (159 aa). The region spanning 160–327 is the OBG-type G domain; it reads ADAGLVGLPN…VLRALTDVIS (168 aa). Residues 166–173, 191–195, 212–215, 279–282, and 308–310 contribute to the GTP site; these read GLPNAGKS, FTTLH, DIPG, NKID, and SGV. The Mg(2+) site is built by Ser-173 and Thr-193. A disordered region spans residues 329-356; it reads APVSTKAKGEPTENETPPPSTGWSPLSN.

This sequence belongs to the TRAFAC class OBG-HflX-like GTPase superfamily. OBG GTPase family. As to quaternary structure, monomer. The cofactor is Mg(2+).

Its subcellular location is the cytoplasm. An essential GTPase which binds GTP, GDP and possibly (p)ppGpp with moderate affinity, with high nucleotide exchange rates and a fairly low GTP hydrolysis rate. Plays a role in control of the cell cycle, stress response, ribosome biogenesis and in those bacteria that undergo differentiation, in morphogenesis control. The protein is GTPase Obg of Afipia carboxidovorans (strain ATCC 49405 / DSM 1227 / KCTC 32145 / OM5) (Oligotropha carboxidovorans).